Reading from the N-terminus, the 294-residue chain is RNA polymerase sigma-K factor (294 aa).

Residues 1–20 (MVTGVFAALGFVVKELVFLV) constitute a propeptide that is removed on maturation. The segment at 1–156 (MVTGVFAALG…VNNCFFIFKS (156 aa)) is encoded by spoIVCB. A Polymerase core binding motif is present at residues 79 to 92 (DLISIGTIGLIKGI). Positions 114–165 (EIVITKGGCIHPSLIRFNIYGVRIHNGNFFHDKVNNCFFIFKSMPPLFVMNN) are not present in recombined mature factor. Residues 157-294 (MPPLFVMNNE…KEKRKKAKGK (138 aa)) form an encoded by spoIIIC region. A DNA-binding region (H-T-H motif) is located at residues 251–270 (QREIAKELGISRSYVSRIEK).

Belongs to the sigma-70 factor family.

Functionally, sigma factors are initiation factors that promote the attachment of RNA polymerase to specific initiation sites and are then released. This sigma factor is responsible for the expression of sporulation specific genes in the mother cell. This Bacillus subtilis (strain 168) protein is RNA polymerase sigma-K factor (sigK).